A 175-amino-acid chain; its full sequence is Flagellar assembly factor FliW (175 aa).

It belongs to the FliW family. Interacts with translational regulator CsrA and flagellin(s).

It localises to the cytoplasm. Functionally, acts as an anti-CsrA protein, binds CsrA and prevents it from repressing translation of its target genes, one of which is flagellin. Binds to flagellin and participates in the assembly of the flagellum. This is Flagellar assembly factor FliW from Bdellovibrio bacteriovorus (strain ATCC 15356 / DSM 50701 / NCIMB 9529 / HD100).